Consider the following 377-residue polypeptide: Nitric oxide reductase FlRd-NAD(+) reductase (377 aa).

It belongs to the FAD-dependent oxidoreductase family. FAD serves as cofactor.

The protein resides in the cytoplasm. It catalyses the reaction 2 reduced [nitric oxide reductase rubredoxin domain] + NAD(+) + H(+) = 2 oxidized [nitric oxide reductase rubredoxin domain] + NADH. Its pathway is nitrogen metabolism; nitric oxide reduction. Its function is as follows. One of at least two accessory proteins for anaerobic nitric oxide (NO) reductase. Reduces the rubredoxin moiety of NO reductase. The protein is Nitric oxide reductase FlRd-NAD(+) reductase of Shigella sonnei (strain Ss046).